The primary structure comprises 297 residues: MRDYADNDSILLKHGWCEMLKGGVIMDVKNVEQAKIAEKAGAIGVMILENIPSELRNTDGVARSVDPLKIEEIRKCISINVLAKVRIGHFVEAQILEELKVDMLDESEVLTMADEYNHINKHKFKTPFVCGCTNLGEALRRISEGASMIRTKGEAGTGNIIEAIKHIRTVNNEIKYLCSLDESEVYNFAKKLRAPIDLILLTRKLKRLPVVNFAAGGIATPADAAMCMQLGMDGVFVGSGIFESENPQKMASSIVMAVSNFNNPKILLNVSLGLGKAMHGNTKVSNKWKNKSEEDNS.

Aspartate 27 lines the D-ribose 5-phosphate pocket. Residue lysine 84 is the Schiff-base intermediate with D-ribose 5-phosphate of the active site. Residue glycine 156 coordinates D-ribose 5-phosphate. Arginine 168 contacts D-glyceraldehyde 3-phosphate. D-ribose 5-phosphate is bound by residues glycine 217 and 238–239; that span reads GS.

The protein belongs to the PdxS/SNZ family. Homohexamer and homododecamer. In the presence of Pdx2, forms a dodecamer of heterodimers.

It catalyses the reaction aldehydo-D-ribose 5-phosphate + D-glyceraldehyde 3-phosphate + L-glutamine = pyridoxal 5'-phosphate + L-glutamate + phosphate + 3 H2O + H(+). Its pathway is cofactor biosynthesis; pyridoxal 5'-phosphate biosynthesis. In terms of biological role, catalyzes the formation of pyridoxal 5'-phosphate from ribose 5-phosphate (RBP), glyceraldehyde 3-phosphate (G3P) and ammonia. The ammonia is provided by Pdx2. Can also use ribulose 5-phosphate and dihydroxyacetone phosphate as substrates, resulting from enzyme-catalyzed isomerization of RBP and G3P, respectively. The sequence is that of Pyridoxal 5'-phosphate synthase subunit Pdx1 from Plasmodium berghei.